Consider the following 160-residue polypeptide: Triabin (160 aa).

Positions 1–18 (MKTIIAVTIFGILTCAYA) are cleaved as a signal peptide. Intrachain disulfides connect C24–C128, C57–C160, and C87–C102.

Belongs to the calycin superfamily. Triabin family. In terms of tissue distribution, expressed in salivary glands.

The protein localises to the secreted. Functionally, thrombin inhibitor. Forms a non-covalent complex with thrombin at a molar ratio of 1:1. Inhibits thrombin-induced platelet aggregation. Prolongs thrombin clotting time and activated partial thromboplastin time. It only minimally suppresses the amidolytic activity of thrombin. Inhibits thrombin-mediated fibrin formation in the host. Inhibits thrombin-induced endothelium-dependent relaxant and contractile responses in host blood vessels. Inhibits thrombin-induced mitogenesis in host vascular smooth muscle cells. This chain is Triabin, found in Meccus pallidipennis (Triatomine bug).